The following is a 228-amino-acid chain: Protein N-lysine methyltransferase METTL21D (228 aa).

Alanine 2 bears the N-acetylalanine mark. S-adenosyl-L-methionine is bound by residues tryptophan 43, 75–77, aspartate 96, tryptophan 126, alanine 142, and tyrosine 147; that span reads GSG.

It belongs to the methyltransferase superfamily. METTL21 family. As to quaternary structure, interacts with ALKBH6. Interacts with ASPSCR1 and UBXN6; interaction with ASPSCR1, but not with UBXN6, enhances VCP methylation. Widely expressed.

Its subcellular location is the cytoplasm. It catalyses the reaction L-lysyl-[protein] + 3 S-adenosyl-L-methionine = N(6),N(6),N(6)-trimethyl-L-lysyl-[protein] + 3 S-adenosyl-L-homocysteine + 3 H(+). Protein N-lysine methyltransferase that specifically trimethylates 'Lys-315' of VCP/p97; this modification may decrease VCP ATPase activity. In Mus musculus (Mouse), this protein is Protein N-lysine methyltransferase METTL21D (Vcpkmt).